A 196-amino-acid polypeptide reads, in one-letter code: 3-isopropylmalate dehydratase small subunit (196 aa).

This sequence belongs to the LeuD family. LeuD type 1 subfamily. As to quaternary structure, heterodimer of LeuC and LeuD.

It carries out the reaction (2R,3S)-3-isopropylmalate = (2S)-2-isopropylmalate. The protein operates within amino-acid biosynthesis; L-leucine biosynthesis; L-leucine from 3-methyl-2-oxobutanoate: step 2/4. Functionally, catalyzes the isomerization between 2-isopropylmalate and 3-isopropylmalate, via the formation of 2-isopropylmaleate. This is 3-isopropylmalate dehydratase small subunit from Streptococcus gordonii (strain Challis / ATCC 35105 / BCRC 15272 / CH1 / DL1 / V288).